Here is a 642-residue protein sequence, read N- to C-terminus: Threonine--tRNA ligase (642 aa).

The 61-residue stretch at 1–61 (MPVITLPDGS…DADATVAIIT (61 aa)) folds into the TGS domain. Positions 243–534 (DHRKIGKQLD…LTEEFAGFFP (292 aa)) are catalytic. Residues cysteine 334, histidine 385, and histidine 511 each coordinate Zn(2+).

It belongs to the class-II aminoacyl-tRNA synthetase family. In terms of assembly, homodimer. Zn(2+) is required as a cofactor.

It localises to the cytoplasm. It carries out the reaction tRNA(Thr) + L-threonine + ATP = L-threonyl-tRNA(Thr) + AMP + diphosphate + H(+). Catalyzes the attachment of threonine to tRNA(Thr) in a two-step reaction: L-threonine is first activated by ATP to form Thr-AMP and then transferred to the acceptor end of tRNA(Thr). Also edits incorrectly charged L-seryl-tRNA(Thr). The sequence is that of Threonine--tRNA ligase from Edwardsiella ictaluri (strain 93-146).